A 253-amino-acid chain; its full sequence is Salivary gland SP38-40.B protein (253 aa).

The first 21 residues, 1–21 (MRIKFLVVLAVICLLAHYASA), serve as a signal peptide directing secretion. 3 disordered regions span residues 23–51 (GMGG…VKAD), 140–168 (KDEK…KECS), and 203–253 (VQGK…DAKK). Composition is skewed to basic and acidic residues over residues 26–51 (GDKK…VKAD) and 154–168 (PPKE…KECS). 2 consecutive repeat copies span residues 29–34 (KPKDAP) and 35–40 (KPKDAP). Residues 29–47 (KPKDAPKPKDAPKPKEVKP) are 3 X 6 AA approximate tandem repeats of K-P-K-D-A-P. The 1-3; approximate repeat unit spans residues 41 to 47 (KPKEVKP). 2 tandem repeats follow at residues 153–156 (KPPK) and 158–161 (KPPK). The segment at 153-166 (KPPKEKPPKKPRKE) is 3 X 4 AA approximate tandem repeats of K-P-P-K. The stretch at 162-166 (KPRKE) is one 2-3; approximate repeat. Residues 206 to 217 (KQKKGAKKAKGG) show a composition bias toward basic residues. Tandem repeats lie at residues 222 to 225 (PKPG), 226 to 229 (PKPA), 230 to 233 (PKPG), 234 to 237 (PKPA), 238 to 241 (PKPV), and 242 to 245 (PKPA). The tract at residues 222-249 (PKPGPKPAPKPGPKPAPKPVPKPADKPK) is 7 X 4 AA approximate tandem repeats of P-K-P-[GAV]. Positions 225–243 (GPKPAPKPGPKPAPKPVPK) are enriched in pro residues. Over residues 244 to 253 (PADKPKDAKK) the composition is skewed to basic and acidic residues. Residues 246-249 (DKPK) form a 3-7; approximate repeat.

As to expression, salivary gland.

The protein resides in the secreted. Its function is as follows. Used by the larvae to construct a supramolecular structure, the larval tube. The chain is Salivary gland SP38-40.B protein (SP38-40.B) from Chironomus tentans (Midge).